Here is a 267-residue protein sequence, read N- to C-terminus: Cell division protein FtsQ (267 aa).

At 1-32 (MRKKTSSNKKKQTKKTNNISLRRKLGLMYKKA) the chain is on the cytoplasmic side. The chain crosses the membrane as a helical span at residues 33-53 (ILGLKIALIIFVCLFVFTKYF). Residues 54–267 (AGIKTYLTTN…DKNKYYIEKY (214 aa)) lie on the Periplasmic side of the membrane. Residues 73–141 (FKLENVIIEG…NTVYIKLFER (69 aa)) enclose the POTRA domain.

The protein belongs to the FtsQ/DivIB family. FtsQ subfamily.

It localises to the cell inner membrane. Functionally, essential cell division protein. The polypeptide is Cell division protein FtsQ (Rickettsia conorii (strain ATCC VR-613 / Malish 7)).